The chain runs to 297 residues: Ribosomal protein L11 methyltransferase (297 aa).

The S-adenosyl-L-methionine site is built by T139, G164, D186, and N233.

Belongs to the methyltransferase superfamily. PrmA family.

The protein resides in the cytoplasm. It catalyses the reaction L-lysyl-[protein] + 3 S-adenosyl-L-methionine = N(6),N(6),N(6)-trimethyl-L-lysyl-[protein] + 3 S-adenosyl-L-homocysteine + 3 H(+). In terms of biological role, methylates ribosomal protein L11. This Trichodesmium erythraeum (strain IMS101) protein is Ribosomal protein L11 methyltransferase.